The chain runs to 230 residues: Putative 14-3-3-like protein GF14-H (230 aa).

It belongs to the 14-3-3 family.

Its function is as follows. Is associated with a DNA binding complex that binds to the G box, a well-characterized cis-acting DNA regulatory element found in plant genes. The protein is Putative 14-3-3-like protein GF14-H (GF14H) of Oryza sativa subsp. japonica (Rice).